Consider the following 609-residue polypeptide: UvrABC system protein C (609 aa).

The 79-residue stretch at 13 to 91 (HEPGVYRMYD…IKLYQPRYNV (79 aa)) folds into the GIY-YIG domain. Residues 201–236 (QQVLDYLIGKMEQASRNLDFEQAARYRDQIQAVRSV) enclose the UVR domain.

Belongs to the UvrC family. Interacts with UvrB in an incision complex.

The protein localises to the cytoplasm. The UvrABC repair system catalyzes the recognition and processing of DNA lesions. UvrC both incises the 5' and 3' sides of the lesion. The N-terminal half is responsible for the 3' incision and the C-terminal half is responsible for the 5' incision. The chain is UvrABC system protein C from Haemophilus influenzae (strain ATCC 51907 / DSM 11121 / KW20 / Rd).